We begin with the raw amino-acid sequence, 95 residues long: Pancreatic polypeptide prohormone (95 aa).

A signal peptide spans 1 to 29 (MAAARLCLSLLLLSTCVALLLQPLLGAQG). Tyr65 is subject to Tyrosine amide. Positions 89–95 (ELSPLDL) are excised as a propeptide.

It belongs to the NPY family.

The protein resides in the secreted. In terms of biological role, hormone secreted by pancreatic cells that acts as a regulator of pancreatic and gastrointestinal functions probably by signaling through the G protein-coupled receptor NPY4R2. The chain is Pancreatic polypeptide prohormone from Homo sapiens (Human).